The primary structure comprises 165 residues: Thiol peroxidase (165 aa).

Residues Pro18–Asn165 form the Thioredoxin domain. Residue Cys60 is the Cysteine sulfenic acid (-SOH) intermediate of the active site. A disulfide bridge connects residues Cys60 and Cys94.

The protein belongs to the peroxiredoxin family. Tpx subfamily. Homodimer.

It catalyses the reaction a hydroperoxide + [thioredoxin]-dithiol = an alcohol + [thioredoxin]-disulfide + H2O. In terms of biological role, thiol-specific peroxidase that catalyzes the reduction of hydrogen peroxide and organic hydroperoxides to water and alcohols, respectively. Plays a role in cell protection against oxidative stress by detoxifying peroxides. The chain is Thiol peroxidase from Corynebacterium glutamicum (strain ATCC 13032 / DSM 20300 / JCM 1318 / BCRC 11384 / CCUG 27702 / LMG 3730 / NBRC 12168 / NCIMB 10025 / NRRL B-2784 / 534).